We begin with the raw amino-acid sequence, 270 residues long: Electron transfer flavoprotein subunit beta (270 aa).

It belongs to the ETF alpha-subunit/FixB family. As to quaternary structure, heterodimer of an alpha and a beta subunit. FAD serves as cofactor.

The electron transfer flavoprotein serves as a specific electron acceptor for other dehydrogenases. It transfers the electrons to the main respiratory chain via ETF-ubiquinone oxidoreductase (ETF dehydrogenase). The chain is Electron transfer flavoprotein subunit beta (etfB) from Megasphaera elsdenii.